The sequence spans 27 residues: Defensin-like protein 2 (27 aa).

Q1 is modified (pyrrolidone carboxylic acid).

Belongs to the DEFL family. Forms oligomers in its native state.

Functionally, possesses some antifungal activity sensitive to inorganic cations and antibacterial activity against B.megaterium. The protein is Defensin-like protein 2 of Brassica campestris (Field mustard).